The sequence spans 851 residues: Nucleolar RNA helicase 2 (851 aa).

The interval 1-260 (MPGKLRSGAK…IPVEQKEGAF (260 aa)) is disordered. Residues serine 7 and serine 13 each carry the phosphoserine modification. Basic and acidic residues-rich tracts occupy residues 26–42 (PSEK…KTEE) and 99–113 (EPLE…KEII). Lysine 39 carries the N6-acetyllysine modification. Tandem repeats lie at residues 117–153 (PSEE…GLSQ), 154–190 (PSEE…GLSQ), and 191–227 (PSEE…GLSQ). The tract at residues 117–227 (PSEEEADMPK…SPRLKDGLSQ (111 aa)) is 3 X 37 AA tandem repeats. Serine 118 carries the post-translational modification Phosphoserine. Residues 133-145 (GKEANGDAGEKSP) are compositionally biased toward basic and acidic residues. At lysine 134 the chain carries N6-acetyllysine. 9 positions are modified to phosphoserine: serine 144, serine 155, serine 181, serine 192, serine 218, serine 236, serine 243, serine 244, and serine 245. Basic and acidic residues predominate over residues 170-182 (GKEANGDAGEKSP). The span at 207–223 (GKEASGDAGEKSPRLKD) shows a compositional bias: basic and acidic residues. Over residues 226 to 237 (SQPSEPKSNSSD) the composition is skewed to polar residues. Residues 246–257 (ETEKEIPVEQKE) are compositionally biased toward basic and acidic residues. The short motif at 258–286 (GAFSNFPISEETVKLLKARGVNFLFPIQA) is the Q motif element. One can recognise a Helicase ATP-binding domain in the interval 289-468 (FHHVYSGKDL…KKYMKSTYEQ (180 aa)). 302-309 (ARTGTGKT) serves as a coordination point for ATP. Threonine 368 carries the post-translational modification Phosphothreonine. Residues 411–414 (DEVD) carry the DEAD box motif. A Helicase C-terminal domain is found at 501 to 645 (DVIRVYSGHQ…GVPSATEIIK (145 aa)). Serine 639 carries the phosphoserine modification. Lysine 672 is subject to N6-acetyllysine. Positions 783-851 (QPELEGPPDG…KRSFSKAFGQ (69 aa)) are disordered. Repeat copies occupy residues 807 to 811 (FRGQR), 817 to 823 (FRGQGQR), and 829 to 833 (FRGQR). Residues 807–833 (FRGQRGGSRNFRGQGQRGGSRNFRGQR) are 3 X 5 AA repeats. Lysine 847 is subject to N6-acetyllysine.

Belongs to the DEAD box helicase family. DDX21/DDX50 subfamily. As to quaternary structure, homodimer; homodimerizes via its N-terminus. Found in a multi-helicase-TICAM1 complex at least composed of DHX36, DDX1, DDX21 and TICAM1; this complex exists in resting cells with or without poly(I:C) RNA ligand stimulation. Interacts (via C-terminus) with TICAM1 (via TIR domain). Interacts with DHX36 (via C-terminus); this interaction serves as bridges to TICAM1. Interacts (via C-terminus) with DDX1 (via B30.2/SPRY domain); this interaction serves as bridges to TICAM1. Component of the B-WICH complex, at least composed of SMARCA5/SNF2H, BAZ1B/WSTF, SF3B1, DEK, MYO1C, ERCC6, MYBBP1A and DDX21. Interacts with C1QBP. Interacts with JUN. Interacts with WDR46. Interacts with MCM3AP. Interacts with WDR43. Interacts with KPNA3. Interacts with GID4. In terms of processing, acetylation by CREBBP/CBP inhibits the helicase activity. Deacetylation by SIRT7 promotes the helicase activity and overcomes R-loop-mediated stalling of RNA polymerases. In terms of tissue distribution, highly expressed in liver and testis. Expressed at lower level in brain, lungs, and skeletal muscle.

It localises to the nucleus. It is found in the nucleolus. Its subcellular location is the nucleoplasm. The protein resides in the cytoplasm. The protein localises to the cytosol. It localises to the mitochondrion. The catalysed reaction is ATP + H2O = ADP + phosphate + H(+). With respect to regulation, acetylation inhibits the helicase activity. Functionally, RNA helicase that acts as a sensor of the transcriptional status of both RNA polymerase (Pol) I and II: promotes ribosomal RNA (rRNA) processing and transcription from polymerase II (Pol II). Binds various RNAs, such as rRNAs, snoRNAs, 7SK and, at lower extent, mRNAs. In the nucleolus, localizes to rDNA locus, where it directly binds rRNAs and snoRNAs, and promotes rRNA transcription, processing and modification. Required for rRNA 2'-O-methylation, possibly by promoting the recruitment of late-acting snoRNAs SNORD56 and SNORD58 with pre-ribosomal complexes. In the nucleoplasm, binds 7SK RNA and is recruited to the promoters of Pol II-transcribed genes: acts by facilitating the release of P-TEFb from inhibitory 7SK snRNP in a manner that is dependent on its helicase activity, thereby promoting transcription of its target genes. Functions as cofactor for JUN-activated transcription: required for phosphorylation of JUN at 'Ser-77'. Can unwind double-stranded RNA (helicase) and can fold or introduce a secondary structure to a single-stranded RNA (foldase). Together with SIRT7, required to prevent R-loop-associated DNA damage and transcription-associated genomic instability: deacetylation by SIRT7 activates the helicase activity, thereby overcoming R-loop-mediated stalling of RNA polymerases. Involved in rRNA processing. May bind to specific miRNA hairpins. Component of a multi-helicase-TICAM1 complex that acts as a cytoplasmic sensor of viral double-stranded RNA (dsRNA) and plays a role in the activation of a cascade of antiviral responses including the induction of pro-inflammatory cytokines via the adapter molecule TICAM1. In Mus musculus (Mouse), this protein is Nucleolar RNA helicase 2 (Ddx21).